We begin with the raw amino-acid sequence, 485 residues long: Serine/threonine-protein kinase 4 (485 aa).

Residues 30-281 enclose the Protein kinase domain; sequence FDVLEKLGEG…ATELLQHPFI (252 aa). ATP-binding positions include 36-44 and K59; that span reads LGEGSYGSV. Catalysis depends on D149, which acts as the Proton acceptor. Position 183 is a phosphothreonine; by autocatalysis (T183). Residues 431–478 enclose the SARAH domain; the sequence is YSFLKDWSVAEVQLKLNSLDPMMEREIEEIHHKYQAKRQPILEAIESK.

It belongs to the protein kinase superfamily. STE Ser/Thr protein kinase family. STE20 subfamily. As to quaternary structure, homodimer; mediated via the coiled-coil region. Mg(2+) is required as a cofactor. In terms of processing, autophosphorylated on Thr-183. Post-translationally, proteolytically cleaved by caspase-3 during apoptosis at Asp-326 resulting in a 37 kDa form. Proteolytic cleavage results in kinase activation and nuclear translocation of the truncated form (MST1/N).

The protein localises to the cytoplasm. Its subcellular location is the nucleus. The enzyme catalyses L-seryl-[protein] + ATP = O-phospho-L-seryl-[protein] + ADP + H(+). The catalysed reaction is L-threonyl-[protein] + ATP = O-phospho-L-threonyl-[protein] + ADP + H(+). The C-terminal non-catalytic region inhibits the kinase activity, the enzyme is activated by caspase-cleavage. Homodimerization and autophosphorylation of Thr-183 is also required for full activation. Its function is as follows. Stress-activated, pro-apoptotic kinase which, following caspase-cleavage, enters the nucleus and induces chromatin condensation followed by internucleosomal DNA fragmentation. Key component of the Hippo signaling pathway which plays a pivotal role in organ size control and tumor suppression by restricting proliferation and promoting apoptosis. The core of this pathway is composed of a kinase cascade wherein stk3/mst2 and stk4/mst1, in complex with its regulatory protein sav1, phosphorylates and activates lats1/2 in complex with its regulatory protein mob1, which in turn phosphorylates and inactivates yap1 oncoprotein and wwtr1/taz. Phosphorylation of yap1 by lats2 inhibits its translocation into the nucleus to regulate cellular genes important for cell proliferation, cell death, and cell migration. Phosphorylates 'Ser-14' of histone H2B (H2BS14ph) during apoptosis. This is Serine/threonine-protein kinase 4 (stk4) from Xenopus laevis (African clawed frog).